A 474-amino-acid chain; its full sequence is Zinc finger protein 230 (474 aa).

In terms of domain architecture, KRAB spans 8–76 (VTFKDVAVFF…ETATQREGNS (69 aa)). A KRNB region spans residues 80–167 (TIAEAGPHED…PQQFHSGEKS (88 aa)). 9 C2H2-type zinc fingers span residues 168 to 190 (HTCN…QRVH), 196 to 218 (SKCD…ERVH), 224 to 246 (FKCE…CKLH), 252 to 274 (YICE…QIIH), 280 to 302 (FKCE…CMVH), 308 to 330 (YKSE…QIIH), 336 to 358 (YNCK…QRIH), 364 to 386 (YRCE…QRVH), and 392 to 414 (YNCK…KKLH). The segment at 420–442 (FKCEDCGKRLVHRSFCKDQQGDH) adopts a C2H2-type 10; atypical zinc-finger fold.

The protein belongs to the krueppel C2H2-type zinc-finger protein family.

It localises to the nucleus. Its function is as follows. May be involved in transcriptional regulation. This chain is Zinc finger protein 230 (ZNF230), found in Homo sapiens (Human).